A 385-amino-acid chain; its full sequence is Queuine tRNA-ribosyltransferase (385 aa).

Catalysis depends on Asp-92, which acts as the Proton acceptor. Residues 92 to 96, Asp-146, Gln-188, and Gly-215 each bind substrate; that span reads DSGGF. The segment at 246 to 252 is RNA binding; sequence GVGHPED. Asp-265 functions as the Nucleophile in the catalytic mechanism. The interval 270 to 274 is RNA binding; important for wobble base 34 recognition; that stretch reads TRTGR. Zn(2+) contacts are provided by Cys-303, Cys-305, Cys-308, and His-334.

Belongs to the queuine tRNA-ribosyltransferase family. Homodimer. Within each dimer, one monomer is responsible for RNA recognition and catalysis, while the other monomer binds to the replacement base PreQ1. Requires Zn(2+) as cofactor.

The catalysed reaction is 7-aminomethyl-7-carbaguanine + guanosine(34) in tRNA = 7-aminomethyl-7-carbaguanosine(34) in tRNA + guanine. Its pathway is tRNA modification; tRNA-queuosine biosynthesis. Functionally, catalyzes the base-exchange of a guanine (G) residue with the queuine precursor 7-aminomethyl-7-deazaguanine (PreQ1) at position 34 (anticodon wobble position) in tRNAs with GU(N) anticodons (tRNA-Asp, -Asn, -His and -Tyr). Catalysis occurs through a double-displacement mechanism. The nucleophile active site attacks the C1' of nucleotide 34 to detach the guanine base from the RNA, forming a covalent enzyme-RNA intermediate. The proton acceptor active site deprotonates the incoming PreQ1, allowing a nucleophilic attack on the C1' of the ribose to form the product. After dissociation, two additional enzymatic reactions on the tRNA convert PreQ1 to queuine (Q), resulting in the hypermodified nucleoside queuosine (7-(((4,5-cis-dihydroxy-2-cyclopenten-1-yl)amino)methyl)-7-deazaguanosine). In Thermus thermophilus (strain ATCC 27634 / DSM 579 / HB8), this protein is Queuine tRNA-ribosyltransferase.